Consider the following 421-residue polypeptide: MDKLIITGGNRLDGEIRISGAKNSALPILAATLLADTPVTVCNLPHLHDITTMIELFGRMGVQPIIDEKLNVEVDASSIKTLVAPYELVKTMRASILVLGPMLARFGEAEVALPGGCAIGSRPVDLHIRGLEAMGAQIEVEGGYIKAKAPAGGLRGGHFFFDTVSVTGTENLMMAAALANGRTVLQNAAREPEVVDLANCLNAMGANVQGAGSDTIVIEGVKRLGGARYDVLPDRIETGTYLVAAAATGGRVKLKDTDPTILEAVLQKLEEAGAHISTGSNWIELDMKGNRPKAVNVRTAPYPAFPTDMQAQFISMNAVAEGTGAVIETVFENRFMHVYEMNRMGAQILVEGNTAIVTGVPKLKGAPVMATDLRASASLVIAGLVAEGDTLIDRIYHIDRGYECIEEKLQLLGAKIRRVPG.

22–23 (KN) lines the phosphoenolpyruvate pocket. Residue Arg93 participates in UDP-N-acetyl-alpha-D-glucosamine binding. Residue Cys117 is the Proton donor of the active site. A 2-(S-cysteinyl)pyruvic acid O-phosphothioketal modification is found at Cys117. Residues 122–126 (RPVDL), Asp308, and Val330 contribute to the UDP-N-acetyl-alpha-D-glucosamine site.

This sequence belongs to the EPSP synthase family. MurA subfamily.

The protein localises to the cytoplasm. It carries out the reaction phosphoenolpyruvate + UDP-N-acetyl-alpha-D-glucosamine = UDP-N-acetyl-3-O-(1-carboxyvinyl)-alpha-D-glucosamine + phosphate. It participates in cell wall biogenesis; peptidoglycan biosynthesis. In terms of biological role, cell wall formation. Adds enolpyruvyl to UDP-N-acetylglucosamine. The polypeptide is UDP-N-acetylglucosamine 1-carboxyvinyltransferase (Pseudomonas aeruginosa (strain LESB58)).